Reading from the N-terminus, the 147-residue chain is uncharacterized protein (147 aa).

This is an uncharacterized protein from Escherichia coli.